Here is a 178-residue protein sequence, read N- to C-terminus: Arginine repressor (178 aa).

Residues 1 to 21 are disordered; sequence MSQAQENEHAGPAVPQTRTAR.

This sequence belongs to the ArgR family.

The protein localises to the cytoplasm. It participates in amino-acid biosynthesis; L-arginine biosynthesis [regulation]. In terms of biological role, regulates arginine biosynthesis genes. In Streptomyces avermitilis (strain ATCC 31267 / DSM 46492 / JCM 5070 / NBRC 14893 / NCIMB 12804 / NRRL 8165 / MA-4680), this protein is Arginine repressor.